Here is a 270-residue protein sequence, read N- to C-terminus: 5'-AMP-activated protein kinase subunit beta-1 (270 aa).

The segment at 1 to 44 (MGNTSSERAALERQAGHKTPRRDSSGGAKDGDRPKILMDSPEDA) is disordered. G2 is lipidated: N-myristoyl glycine. T4 is subject to Phosphothreonine. Phosphoserine is present on residues S5 and S6. Positions 9 to 36 (AALERQAGHKTPRRDSSGGAKDGDRPKI) are enriched in basic and acidic residues. Residue T19 is modified to Phosphothreonine. Residues S24 and S25 each carry the phosphoserine; by autocatalysis modification. Phosphoserine is present on residues S40, S96, and S101. The glycogen-binding domain stretch occupies residues 68–163 (EANDKAPAQA…QVKKTDFEVF (96 aa)). S108 is subject to Phosphoserine; by autocatalysis. The residue at position 148 (T148) is a Phosphothreonine. S182 is subject to Phosphoserine. At K201 the chain carries N6-succinyllysine.

The protein belongs to the 5'-AMP-activated protein kinase beta subunit family. AMPK is a heterotrimer of an alpha catalytic subunit (PRKAA1 or PRKAA2), a beta (PRKAB1 or PRKAB2) and a gamma non-catalytic subunits (PRKAG1, PRKAG2 or PRKAG3). Interacts with FNIP1 and FNIP2. Post-translationally, phosphorylated when associated with the catalytic subunit (PRKAA1 or PRKAA2). Phosphorylated by ULK1; leading to negatively regulate AMPK activity and suggesting the existence of a regulatory feedback loop between ULK1 and AMPK.

Non-catalytic subunit of AMP-activated protein kinase (AMPK), an energy sensor protein kinase that plays a key role in regulating cellular energy metabolism. In response to reduction of intracellular ATP levels, AMPK activates energy-producing pathways and inhibits energy-consuming processes: inhibits protein, carbohydrate and lipid biosynthesis, as well as cell growth and proliferation. AMPK acts via direct phosphorylation of metabolic enzymes, and by longer-term effects via phosphorylation of transcription regulators. Also acts as a regulator of cellular polarity by remodeling the actin cytoskeleton; probably by indirectly activating myosin. Beta non-catalytic subunit acts as a scaffold on which the AMPK complex assembles, via its C-terminus that bridges alpha (PRKAA1 or PRKAA2) and gamma subunits (PRKAG1, PRKAG2 or PRKAG3). This chain is 5'-AMP-activated protein kinase subunit beta-1 (Prkab1), found in Mus musculus (Mouse).